We begin with the raw amino-acid sequence, 492 residues long: 2,3-bisphosphoglycerate-independent phosphoglycerate mutase (492 aa).

Positions 11 and 61 each coordinate Mn(2+). The active-site Phosphoserine intermediate is serine 61. Substrate-binding positions include histidine 118, 147–148 (RD), arginine 178, arginine 184, 248–251 (RNDR), and lysine 320. Residues aspartate 386, histidine 390, aspartate 427, histidine 428, and histidine 445 each coordinate Mn(2+).

Belongs to the BPG-independent phosphoglycerate mutase family. Monomer. Mn(2+) serves as cofactor.

The enzyme catalyses (2R)-2-phosphoglycerate = (2R)-3-phosphoglycerate. The protein operates within carbohydrate degradation; glycolysis; pyruvate from D-glyceraldehyde 3-phosphate: step 3/5. Its function is as follows. Catalyzes the interconversion of 2-phosphoglycerate and 3-phosphoglycerate. The protein is 2,3-bisphosphoglycerate-independent phosphoglycerate mutase of Campylobacter jejuni subsp. doylei (strain ATCC BAA-1458 / RM4099 / 269.97).